A 344-amino-acid polypeptide reads, in one-letter code: Ion-translocating oxidoreductase complex subunit D (344 aa).

Transmembrane regions (helical) follow at residues 23 to 43, 44 to 64, 77 to 99, and 120 to 140; these read LVLGACVPGLLTLTWLYGPGT, LLNLAWASLVALACEAAMLAL, SALVTALLLAVALPPYAPWWLTL, and PFNPAMLGYVVALVSFPLEMT. Thr172 carries the FMN phosphoryl threonine modification. A run of 5 helical transmembrane segments spans residues 198 to 218, 222 to 242, 252 to 272, 285 to 305, and 306 to 326; these read LGSAGSEWVNLAFLLGGLFLL, LFTWHAPLGMLAGLFAMSLLF, GSPLFHLFSGATMLGAFFIVT, LVFGLGVGVLTYVIRAWGGYP, and DGVAFAVLLMNLAAPTIDYYT.

The protein belongs to the NqrB/RnfD family. The complex is composed of six subunits: RnfA, RnfB, RnfC, RnfD, RnfE and RnfG. FMN is required as a cofactor.

It is found in the cell inner membrane. Part of a membrane-bound complex that couples electron transfer with translocation of ions across the membrane. The chain is Ion-translocating oxidoreductase complex subunit D from Pseudomonas aeruginosa (strain UCBPP-PA14).